Consider the following 237-residue polypeptide: Large ribosomal subunit protein uL1 (237 aa).

Belongs to the universal ribosomal protein uL1 family. Part of the 50S ribosomal subunit.

Its function is as follows. Binds directly to 23S rRNA. The L1 stalk is quite mobile in the ribosome, and is involved in E site tRNA release. Functionally, protein L1 is also a translational repressor protein, it controls the translation of the L11 operon by binding to its mRNA. In Synechococcus elongatus (strain ATCC 33912 / PCC 7942 / FACHB-805) (Anacystis nidulans R2), this protein is Large ribosomal subunit protein uL1.